Consider the following 547-residue polypeptide: Chaperonin GroEL (547 aa).

ATP-binding positions include 30-33, Lys51, 87-91, Gly415, 479-481, and Asp495; these read TLGP, DGTTT, and NAA.

Belongs to the chaperonin (HSP60) family. As to quaternary structure, forms a cylinder of 14 subunits composed of two heptameric rings stacked back-to-back. Interacts with the co-chaperonin GroES.

It localises to the cytoplasm. The enzyme catalyses ATP + H2O + a folded polypeptide = ADP + phosphate + an unfolded polypeptide.. In terms of biological role, together with its co-chaperonin GroES, plays an essential role in assisting protein folding. The GroEL-GroES system forms a nano-cage that allows encapsulation of the non-native substrate proteins and provides a physical environment optimized to promote and accelerate protein folding. The sequence is that of Chaperonin GroEL from Cupriavidus pinatubonensis (strain JMP 134 / LMG 1197) (Cupriavidus necator (strain JMP 134)).